We begin with the raw amino-acid sequence, 391 residues long: Multidrug resistance protein MdtL (391 aa).

The next 12 membrane-spanning stretches (helical) occupy residues 4–24 (FLIC…MYLV), 42–62 (IAFS…GKVA), 69–89 (PVAI…SLAE), 93–113 (LFLA…VVAF), 131–151 (LLNG…HLIM), 158–178 (SLFW…LFIL), 203–222 (FFLS…LTFV), 245–265 (ALTA…LGIF), 269–289 (TLMI…AVSP), 293–313 (VSLF…GVAM), 331–351 (LGIA…VVGI), and 356–376 (MLIG…MFVA).

It belongs to the major facilitator superfamily. DHA1 family. MdtL (TC 2.A.1.2.22) subfamily.

The protein localises to the cell inner membrane. In terms of biological role, confers resistance to chloramphenicol. This is Multidrug resistance protein MdtL from Escherichia coli (strain SMS-3-5 / SECEC).